The sequence spans 66 residues: Large ribosomal subunit protein bL31 (66 aa).

The Zn(2+) site is built by cysteine 16, cysteine 18, cysteine 36, and cysteine 39.

The protein belongs to the bacterial ribosomal protein bL31 family. Type A subfamily. Part of the 50S ribosomal subunit. Zn(2+) is required as a cofactor.

Its function is as follows. Binds the 23S rRNA. The polypeptide is Large ribosomal subunit protein bL31 (Campylobacter curvus (strain 525.92)).